A 102-amino-acid polypeptide reads, in one-letter code: Small ribosomal subunit protein uS10 (102 aa).

It belongs to the universal ribosomal protein uS10 family. As to quaternary structure, part of the 30S ribosomal subunit.

Its function is as follows. Involved in the binding of tRNA to the ribosomes. This is Small ribosomal subunit protein uS10 from Levilactobacillus brevis (strain ATCC 367 / BCRC 12310 / CIP 105137 / JCM 1170 / LMG 11437 / NCIMB 947 / NCTC 947) (Lactobacillus brevis).